The chain runs to 209 residues: Small ribosomal subunit protein uS5 (209 aa).

Residues 48–111 enclose the S5 DRBM domain; it reads LEDEVLDINM…DAAKLNITYI (64 aa).

This sequence belongs to the universal ribosomal protein uS5 family. Part of the 30S ribosomal subunit. Contacts protein S4.

With S4 and S12 plays an important role in translational accuracy. This Methanosarcina mazei (strain ATCC BAA-159 / DSM 3647 / Goe1 / Go1 / JCM 11833 / OCM 88) (Methanosarcina frisia) protein is Small ribosomal subunit protein uS5.